The primary structure comprises 375 residues: MAVRLCDVASLLRSGSWAAEPWTGQVIAAMETQLSNGPTCNNTANCPNTINNCSSPVESSNTEDSKTNLIVNYLPQNMTQEELKSLFGSIGEIESCKLVRDKITGQSLGYGFVNYIDPKDAEKAINTLNGLRLQTKTIKVSYARPSSASIRDANLYVSGLPKTMTQKELEQLFSQYGRIITSRILVDQVTGVSRGVGFIRFDKRIEAEEAIKGLNGQKPPGATEPITVKFANNPSQKVNHTILSQLYQSPNRRYPGPLAQQAQRFSRFSPMTIDGMTSLAGINFPGHAGTGWCIFVYNLAPDADESILWQMFGPFGAVTNVKVIRDFNTNKCKGFGFVTMTNYDEAAMAIASLNGYRLGDRVLQVSFKTSKTHKA.

RRM domains lie at T67–P145, A153–N233, and W292–S370.

The protein belongs to the RRM elav family. Part of a ribonucleoprotein (RNP) complex, at least composed of elavl1/elrA and/or elavl2/elrB, igf2bp3/vg1RBP, ddx6/Xp54, ybx2/frgy2, lsm14b/rap55b and, in a subset of RNP complexes, stau1/staufen. Binds RNA as a homooligomer.

The protein localises to the cytoplasm. It is found in the cell cortex. In terms of biological role, binds to poly-U elements and AU-rich elements (AREs) in the 3'-UTR of target mRNAs. Required for the vegetal localization of vg1 mRNA. Probably required for nervous system development. This Xenopus tropicalis (Western clawed frog) protein is ELAV-like protein 2.